The following is a 496-amino-acid chain: Glutamyl-tRNA(Gln) amidotransferase subunit A (496 aa).

Active-site charge relay system residues include K75 and S150. The active-site Acyl-ester intermediate is the S174.

This sequence belongs to the amidase family. GatA subfamily. Heterotrimer of A, B and C subunits.

The enzyme catalyses L-glutamyl-tRNA(Gln) + L-glutamine + ATP + H2O = L-glutaminyl-tRNA(Gln) + L-glutamate + ADP + phosphate + H(+). Its function is as follows. Allows the formation of correctly charged Gln-tRNA(Gln) through the transamidation of misacylated Glu-tRNA(Gln) in organisms which lack glutaminyl-tRNA synthetase. The reaction takes place in the presence of glutamine and ATP through an activated gamma-phospho-Glu-tRNA(Gln). The sequence is that of Glutamyl-tRNA(Gln) amidotransferase subunit A from Burkholderia ambifaria (strain MC40-6).